A 264-amino-acid chain; its full sequence is Acyl-[acyl-carrier-protein]--UDP-N-acetylglucosamine O-acyltransferase (264 aa).

It belongs to the transferase hexapeptide repeat family. LpxA subfamily. In terms of assembly, homotrimer.

The protein resides in the cytoplasm. It carries out the reaction a (3R)-hydroxyacyl-[ACP] + UDP-N-acetyl-alpha-D-glucosamine = a UDP-3-O-[(3R)-3-hydroxyacyl]-N-acetyl-alpha-D-glucosamine + holo-[ACP]. Its pathway is glycolipid biosynthesis; lipid IV(A) biosynthesis; lipid IV(A) from (3R)-3-hydroxytetradecanoyl-[acyl-carrier-protein] and UDP-N-acetyl-alpha-D-glucosamine: step 1/6. Involved in the biosynthesis of lipid A, a phosphorylated glycolipid that anchors the lipopolysaccharide to the outer membrane of the cell. This is Acyl-[acyl-carrier-protein]--UDP-N-acetylglucosamine O-acyltransferase from Glaesserella parasuis serovar 5 (strain SH0165) (Haemophilus parasuis).